A 277-amino-acid polypeptide reads, in one-letter code: Phosphoenolpyruvate synthase regulatory protein (277 aa).

157 to 164 serves as a coordination point for ADP; sequence GVSRCGKT.

The protein belongs to the pyruvate, phosphate/water dikinase regulatory protein family. PSRP subfamily.

It catalyses the reaction [pyruvate, water dikinase] + ADP = [pyruvate, water dikinase]-phosphate + AMP + H(+). The catalysed reaction is [pyruvate, water dikinase]-phosphate + phosphate + H(+) = [pyruvate, water dikinase] + diphosphate. Functionally, bifunctional serine/threonine kinase and phosphorylase involved in the regulation of the phosphoenolpyruvate synthase (PEPS) by catalyzing its phosphorylation/dephosphorylation. In Shigella boydii serotype 4 (strain Sb227), this protein is Phosphoenolpyruvate synthase regulatory protein.